The sequence spans 564 residues: Pyruvate decarboxylase (564 aa).

Pyruvate-binding residues include Asp28 and His115. Residues Thr390 and 413–415 (GSI) contribute to the thiamine diphosphate site. Asp444 lines the Mg(2+) pocket. Residues 445–446 (GS) and 471–476 (NNGYTI) each bind thiamine diphosphate. Positions 471 and 473 each coordinate Mg(2+). Glu477 is a binding site for pyruvate.

Belongs to the TPP enzyme family. Homotetramer. Requires Mg(2+) as cofactor. It depends on thiamine diphosphate as a cofactor.

The enzyme catalyses a 2-oxocarboxylate + H(+) = an aldehyde + CO2. It carries out the reaction pyruvate + H(+) = acetaldehyde + CO2. The sequence is that of Pyruvate decarboxylase (PDC) from Hanseniaspora uvarum (Yeast).